We begin with the raw amino-acid sequence, 452 residues long: Tissue alpha-L-fucosidase (452 aa).

Residues 1–17 form the signal peptide; the sequence is MLLLLLLLLVAAAQAVA. 4 N-linked (GlcNAc...) asparagine glycosylation sites follow: Asn227, Asn254, Asn368, and Asn378.

It belongs to the glycosyl hydrolase 29 family. Homotetramer.

The protein resides in the lysosome. The enzyme catalyses an alpha-L-fucoside + H2O = L-fucose + an alcohol. It catalyses the reaction a neolactoside IV(2)-alpha-Fuc-nLc4Cer(d18:1(4E)) + H2O = a neolactoside nLc4Cer(d18:1(4E)) + L-fucose. The catalysed reaction is a neolactoside IV(2)-alpha-Fuc-nLc4Cer(d18:0) + H2O = a neolactoside nLc4Cer(d18:0) + L-fucose. In terms of biological role, alpha-L-fucosidase is responsible for hydrolyzing the alpha-1,6-linked fucose joined to the reducing-end N-acetylglucosamine of the carbohydrate moieties of glycoproteins. This Mus musculus (Mouse) protein is Tissue alpha-L-fucosidase (Fuca1).